The primary structure comprises 645 residues: Threonine--tRNA ligase (645 aa).

Residues 1 to 61 form the TGS domain; sequence MIKITLPDGS…TSDSTVQLLT (61 aa). Residues 242–541 form a catalytic region; sequence DHRKLGKELE…LIEHVAGNFP (300 aa). Residues C337, H388, and H518 each coordinate Zn(2+).

The protein belongs to the class-II aminoacyl-tRNA synthetase family. In terms of assembly, homodimer. The cofactor is Zn(2+).

It localises to the cytoplasm. It catalyses the reaction tRNA(Thr) + L-threonine + ATP = L-threonyl-tRNA(Thr) + AMP + diphosphate + H(+). Its function is as follows. Catalyzes the attachment of threonine to tRNA(Thr) in a two-step reaction: L-threonine is first activated by ATP to form Thr-AMP and then transferred to the acceptor end of tRNA(Thr). Also edits incorrectly charged L-seryl-tRNA(Thr). In Cytophaga hutchinsonii (strain ATCC 33406 / DSM 1761 / CIP 103989 / NBRC 15051 / NCIMB 9469 / D465), this protein is Threonine--tRNA ligase.